The sequence spans 86 residues: Weak toxin 3 (86 aa).

A signal peptide spans 1–23; it reads MKTLLLTLVVVTIVCLDLGYTLT. 5 disulfide bridges follow: Cys24–Cys45, Cys27–Cys32, Cys38–Cys63, Cys67–Cys78, and Cys79–Cys84.

Belongs to the three-finger toxin family. Ancestral subfamily. Orphan group II sub-subfamily. In terms of tissue distribution, expressed by the venom gland.

The protein localises to the secreted. Its function is as follows. Binds with low affinity to muscular (alpha-1-beta-1-delta-epsilon/CHRNA1-CHRNB1-CHRND-CHRNE) and very low affinity to neuronal (alpha-7/CHRNA7) nicotinic acetylcholine receptor (nAChR). This is Weak toxin 3 from Bungarus candidus (Malayan krait).